The following is a 361-amino-acid chain: Probable lipid desaturase ADS3.2, chloroplastic (361 aa).

The transit peptide at methionine 1–valine 57 directs the protein to the chloroplast. A run of 2 helical transmembrane segments spans residues leucine 99 to tryptophan 118 and tryptophan 122 to tyrosine 139. Residues histidine 140 to histidine 145 carry the Histidine box-1 motif. The Histidine box-2 signature appears at histidine 177 to histidine 181. The chain crosses the membrane as a helical span at residues phenylalanine 246–alanine 266. Positions histidine 309–histidine 313 match the Histidine box-3 motif.

It belongs to the fatty acid desaturase type 1 family. The cofactor is Fe(2+).

The protein resides in the plastid. Its subcellular location is the chloroplast membrane. Its pathway is lipid metabolism; polyunsaturated fatty acid biosynthesis. This Arabidopsis thaliana (Mouse-ear cress) protein is Probable lipid desaturase ADS3.2, chloroplastic.